A 526-amino-acid chain; its full sequence is MMKNLPEVGNGGGSGFPAVSVGNKKNKYQRMDSDAEESQNHREAEARNSRTRKYVMACAFFASLNNVLLGYDVGVMSGAVLFIQQDLKITEVQTEVLIGSLSIISLFGSLAGGRTSDSIGRKWTMALAALVFQTGAAVMAVAPSFEVLMIGRTLAGIGIGLGVMIAPVYIAEISPTVARGFFTSFPEIFINLGILLGYVSNYAFSGLSVHISWRIMLAVGILPSVFIGFALCVIPESPRWLVMKGRVDSAREVLMKTNERDDEAEERLAEIQLAAAHTEGSEDRPVWRELLSPSPVVRKMLIVGFGIQCFQQITGIDATVYYSPEILKEAGIQDETKLLAATVAVGVTKTVFILFATFLIDSVGRKPLLYVSTIGMTLCLFCLSFTLTFLGQGTLGITLALLFVCGNVAFFSIGMGPVCWVLTSEIFPLRLRAQASALGAVGNRVCSGLVAMSFLSVSRAITVGGTFFVFSLVSALSVIFVYVLVPETSGKSLEQIELMFQGGLERKDGEVELGDAERLVRKEQEF.

Disordered regions lie at residues Met1 to Val21 and Tyr28 to Arg47. Basic and acidic residues predominate over residues Gln29 to Arg47. 12 helical membrane passes run Ser63–Ile83, Val92–Gly112, Met125–Phe145, Thr153–Ile173, Gly180–Ser200, Ile215–Pro235, Met300–Val320, Ala340–Ile360, Val371–Gly391, Leu395–Met415, Ala437–Val457, and Gly465–Val485.

This sequence belongs to the major facilitator superfamily. Sugar transporter (TC 2.A.1.1) family.

Its subcellular location is the membrane. Functionally, plasma membrane sugar-proton symporter. The sequence is that of Probable polyol transporter 4 (PLT4) from Arabidopsis thaliana (Mouse-ear cress).